The sequence spans 476 residues: Serine protease HTRA4 (476 aa).

The N-terminal stretch at 1–31 (MIRPQLRTAGLGRCLLPGLLLLLVPVLWAGA) is a signal peptide. The 74-residue stretch at 36–109 (TQPSCPAVCQ…PGFPSTCGCP (74 aa)) folds into the IGFBP N-terminal domain. Cystine bridges form between C40-C66, C44-C68, C49-C69, C55-C72, C80-C94, C88-C106, C108-C127, and C116-C152. A Kazal-like domain is found at 88–154 (CAPGLQCLQP…VPVQWGNCGD (67 aa)). The segment at 202–362 (GSGFIVSEDG…IPSDRVRQFL (161 aa)) is serine protease. Active-site charge relay system residues include H218, D248, and S326. The PDZ domain occupies 383 to 474 (LQMLSLTVPL…NLLLTVIPET (92 aa)).

This sequence belongs to the peptidase S1C family.

The protein resides in the secreted. Its function is as follows. Serine protease. This is Serine protease HTRA4 (HTRA4) from Homo sapiens (Human).